Reading from the N-terminus, the 332-residue chain is Holliday junction branch migration complex subunit RuvB (332 aa).

The interval Met1–Tyr181 is large ATPase domain (RuvB-L). Positions 20, 21, 62, 65, 66, 67, 171, 181, and 218 each coordinate ATP. Thr66 contacts Mg(2+). Residues Asn182–Gly252 are small ATPAse domain (RuvB-S). The interval Ser255–Ile332 is head domain (RuvB-H). Residues Arg291, Arg310, and Arg315 each coordinate DNA.

This sequence belongs to the RuvB family. Homohexamer. Forms an RuvA(8)-RuvB(12)-Holliday junction (HJ) complex. HJ DNA is sandwiched between 2 RuvA tetramers; dsDNA enters through RuvA and exits via RuvB. An RuvB hexamer assembles on each DNA strand where it exits the tetramer. Each RuvB hexamer is contacted by two RuvA subunits (via domain III) on 2 adjacent RuvB subunits; this complex drives branch migration. In the full resolvosome a probable DNA-RuvA(4)-RuvB(12)-RuvC(2) complex forms which resolves the HJ.

The protein resides in the cytoplasm. The enzyme catalyses ATP + H2O = ADP + phosphate + H(+). Its function is as follows. The RuvA-RuvB-RuvC complex processes Holliday junction (HJ) DNA during genetic recombination and DNA repair, while the RuvA-RuvB complex plays an important role in the rescue of blocked DNA replication forks via replication fork reversal (RFR). RuvA specifically binds to HJ cruciform DNA, conferring on it an open structure. The RuvB hexamer acts as an ATP-dependent pump, pulling dsDNA into and through the RuvAB complex. RuvB forms 2 homohexamers on either side of HJ DNA bound by 1 or 2 RuvA tetramers; 4 subunits per hexamer contact DNA at a time. Coordinated motions by a converter formed by DNA-disengaged RuvB subunits stimulates ATP hydrolysis and nucleotide exchange. Immobilization of the converter enables RuvB to convert the ATP-contained energy into a lever motion, pulling 2 nucleotides of DNA out of the RuvA tetramer per ATP hydrolyzed, thus driving DNA branch migration. The RuvB motors rotate together with the DNA substrate, which together with the progressing nucleotide cycle form the mechanistic basis for DNA recombination by continuous HJ branch migration. Branch migration allows RuvC to scan DNA until it finds its consensus sequence, where it cleaves and resolves cruciform DNA. This Fusobacterium nucleatum subsp. nucleatum (strain ATCC 25586 / DSM 15643 / BCRC 10681 / CIP 101130 / JCM 8532 / KCTC 2640 / LMG 13131 / VPI 4355) protein is Holliday junction branch migration complex subunit RuvB.